The primary structure comprises 190 residues: Potassium-transporting ATPase KdpC subunit (190 aa).

The helical transmembrane segment at 15-35 threads the bilayer; the sequence is LWILTALIYPAIVLVIGQLVF.

The protein belongs to the KdpC family. As to quaternary structure, the system is composed of three essential subunits: KdpA, KdpB and KdpC.

The protein resides in the cell inner membrane. Its function is as follows. Part of the high-affinity ATP-driven potassium transport (or Kdp) system, which catalyzes the hydrolysis of ATP coupled with the electrogenic transport of potassium into the cytoplasm. This subunit acts as a catalytic chaperone that increases the ATP-binding affinity of the ATP-hydrolyzing subunit KdpB by the formation of a transient KdpB/KdpC/ATP ternary complex. This chain is Potassium-transporting ATPase KdpC subunit, found in Synechocystis sp. (strain ATCC 27184 / PCC 6803 / Kazusa).